The chain runs to 417 residues: mRNA cap guanine-N(7) methyltransferase (417 aa).

Residues 129-412 form the mRNA cap 0 methyltransferase domain; it reads SPIIKLRNFN…LYTVFAFKKV (284 aa). Residue 138–139 participates in mRNA binding; it reads NN. Residues Lys-142, Gly-160, Asp-182, Asp-211, Gln-237, and Tyr-242 each coordinate S-adenosyl-L-methionine.

The protein belongs to the class I-like SAM-binding methyltransferase superfamily. mRNA cap 0 methyltransferase family.

It localises to the nucleus. The catalysed reaction is a 5'-end (5'-triphosphoguanosine)-ribonucleoside in mRNA + S-adenosyl-L-methionine = a 5'-end (N(7)-methyl 5'-triphosphoguanosine)-ribonucleoside in mRNA + S-adenosyl-L-homocysteine. Responsible for methylating the 5'-cap structure of mRNAs. This Candida glabrata (strain ATCC 2001 / BCRC 20586 / JCM 3761 / NBRC 0622 / NRRL Y-65 / CBS 138) (Yeast) protein is mRNA cap guanine-N(7) methyltransferase (ABD1).